The sequence spans 206 residues: Large ribosomal subunit protein uL4 (206 aa).

The interval 47 to 79 (GTKGQKNRSAVRGGGAKPWAQKGSGRARAGTSR) is disordered. Residues 69–79 (GSGRARAGTSR) are compositionally biased toward low complexity.

Belongs to the universal ribosomal protein uL4 family. Part of the 50S ribosomal subunit.

In terms of biological role, one of the primary rRNA binding proteins, this protein initially binds near the 5'-end of the 23S rRNA. It is important during the early stages of 50S assembly. It makes multiple contacts with different domains of the 23S rRNA in the assembled 50S subunit and ribosome. Forms part of the polypeptide exit tunnel. This chain is Large ribosomal subunit protein uL4, found in Hydrogenovibrio crunogenus (strain DSM 25203 / XCL-2) (Thiomicrospira crunogena).